Here is a 503-residue protein sequence, read N- to C-terminus: Puromycin resistance protein pur8 (503 aa).

The Cytoplasmic segment spans residues 1 to 24; the sequence is MARKPDISAVPVESAACQGPDPRR. A helical membrane pass occupies residues 25–45; it reads WWGLVVILAAQLLVVLDGTVV. The Extracellular portion of the chain corresponds to 46–64; the sequence is NIALPSVQRDLGMSDTSRQ. Residues 65-85 form a helical membrane-spanning segment; that stretch reads WVITAYTLAFGGLLLLGGRVA. At 86–92 the chain is on the cytoplasmic side; sequence DAFGRRR. A helical transmembrane segment spans residues 93 to 113; that stretch reads IFAVGILGFGLASLLGGAAPD. Residues 114–122 are Extracellular-facing; that stretch reads PGTLFLARA. A helical transmembrane segment spans residues 123–143; it reads LQGVFAAALAPAALALINTLF. Over 144-152 the chain is Cytoplasmic; it reads TEPGERGKA. Residues 153–173 form a helical membrane-spanning segment; sequence FGVYGAVSGGGAAVGLLAGGL. Residues 174-181 lie on the Extracellular side of the membrane; it reads LTEYLDWR. The helical transmembrane segment at 182–202 threads the bilayer; it reads WCLYVNAPVALLALLGCRLLP. Topologically, residues 203-212 are cytoplasmic; the sequence is RDRRTGRAVR. Residues 213-233 form a helical membrane-spanning segment; that stretch reads LDLPGTLLGCGGLVAIVYAFA. Over 234–241 the chain is Extracellular; the sequence is EAESGWGD. A helical membrane pass occupies residues 242 to 262; it reads PLVVRLLVLGVLMLVAFALVE. The Cytoplasmic segment spans residues 263–280; sequence RRVQDPLLPPGVVAHRVR. A helical transmembrane segment spans residues 281–301; sequence GGSFLVVGLPQIGLFGLFLFL. Topologically, residues 302–313 are extracellular; it reads TYYLQGILDYSP. Residues 314 to 334 form a helical membrane-spanning segment; that stretch reads VLTGVAFLPLGLGIAVGSSLI. Over 335–346 the chain is Cytoplasmic; it reads AARLLPRTRPRT. Residues 347 to 367 traverse the membrane as a helical segment; the sequence is LIVGALLAAAAGMALLTRLEP. Residues 368–371 lie on the Extracellular side of the membrane; it reads DTPQ. The chain crosses the membrane as a helical span at residues 372–392; sequence VYLTHLLPAQILIGLGIGCMM. The Cytoplasmic portion of the chain corresponds to 393 to 422; it reads MPAMHTATARVAPHEAGAAAAVVNSAQQVG. A helical transmembrane segment spans residues 423–443; that stretch reads GALGVALLNTVSTGATAAYLA. Over 444–461 the chain is Extracellular; sequence DHGTSPAATVDGTVHGYT. A helical membrane pass occupies residues 462-482; the sequence is VAIAFAVGVLLLTAVLAWVLI. The Cytoplasmic segment spans residues 483–503; that stretch reads DSRTEAADETGSASVTPARPR.

It belongs to the major facilitator superfamily. EmrB family.

It is found in the cell membrane. Functionally, may be involved in active puromycin efflux energized by a proton-dependent electrochemical gradient. In addition, it could be implicated in secreting N-acetylpuromycin, the last intermediate of the puromycin biosynthesis pathway, to the environment. This is Puromycin resistance protein pur8 (pur8) from Streptomyces alboniger.